Reading from the N-terminus, the 43-residue chain is Protein PsbN (43 aa).

The helical transmembrane segment at 7–27 (VAIFISGLLVSFTGYALYTAF) threads the bilayer.

The protein belongs to the PsbN family.

It localises to the plastid. The protein resides in the chloroplast thylakoid membrane. May play a role in photosystem I and II biogenesis. This chain is Protein PsbN, found in Sagittaria latifolia (Broadleaf arrowhead).